The sequence spans 483 residues: GDP-fucose protein O-fucosyltransferase 3 (483 aa).

At 1-8 (MVRIPRRK) the chain is on the cytoplasmic side. A helical; Signal-anchor for type II membrane protein transmembrane segment spans residues 9–31 (LLPSCLCMTATVFLMVTVQVLVE). Residues 32 to 483 (LGKFERKKFK…FWALVFKDSF (452 aa)) lie on the Lumenal side of the membrane. A disordered region spans residues 45 to 64 (LQDGQKDVEGDPKHLNPLPK). Residues N110, N168, and N318 are each glycosylated (N-linked (GlcNAc...) asparagine). C389 and C392 are disulfide-bonded. N468 carries an N-linked (GlcNAc...) asparagine glycan.

The protein belongs to the glycosyltransferase 10 family.

It localises to the endoplasmic reticulum membrane. The catalysed reaction is L-threonyl-[protein] + GDP-beta-L-fucose = 3-O-(alpha-L-fucosyl)-L-threonyl-[protein] + GDP + H(+). The enzyme catalyses L-seryl-[protein] + GDP-beta-L-fucose = 3-O-(alpha-L-fucosyl)-L-seryl-[protein] + GDP + H(+). The protein operates within protein modification; protein glycosylation. Functionally, protein O-fucosyltransferase that specifically catalyzes O-fucosylation of serine or threonine residues in EMI domains of target proteins, such as MMRN1, MMRN2 and EMID1. Attaches fucose through an O-glycosidic linkage. O-fucosylation of EMI domain-containing proteins may be required for facilitating protein folding and secretion. May also show alpha-(1,3)-fucosyltransferase activity toward the innermost N-acetyl glucosamine (GlcNAc) residue in biantennary N-glycan acceptors. However, this was tested with a library of synthetic substrates and this activity is unsure in vivo. May be involved in biosynthesis of Lewis X-carrying biantennary N-glycans that regulate neuron stem cell self-renewal during brain development. The polypeptide is GDP-fucose protein O-fucosyltransferase 3 (Fut10) (Rattus norvegicus (Rat)).